The following is a 644-amino-acid chain: Interleukin-23 receptor (644 aa).

The first 23 residues, Met-1–Gly-23, serve as a signal peptide directing secretion. Residues Gly-24 to Gly-374 are Extracellular-facing. 3 N-linked (GlcNAc...) asparagine glycosylation sites follow: Asn-47, Asn-130, and Asn-232. 2 consecutive Fibronectin type-III domains span residues Ala-127 to Ile-217 and Ile-219 to Glu-318. Residues Leu-375–Phe-395 traverse the membrane as a helical segment. Topologically, residues Asn-396–Lys-644 are cytoplasmic.

It belongs to the type I cytokine receptor family. Type 2 subfamily. Heterodimer with IL12RB1. In presence of IL23, the heterodimer forms the IL23 receptor. Interacts with JAK2 and in presence of IL23 with STAT3. In terms of processing, phosphorylated in response to IL23. As to expression, expressed by Th1, Th2 and dendritic cells.

The protein localises to the cell membrane. In terms of biological role, associates with IL12RB1 to form the interleukin-23 receptor. Binds IL23 and mediates T-cells, NK cells and possibly certain macrophage/myeloid cells stimulation probably through activation of the Jak-Stat signaling cascade. IL23 functions in innate and adaptive immunity and may participate in acute response to infection in peripheral tissues. IL23 may be responsible for autoimmune inflammatory diseases and be important for tumorigenesis. In Mus musculus (Mouse), this protein is Interleukin-23 receptor (Il23r).